The following is a 443-amino-acid chain: Threonine/serine transporter TdcC (443 aa).

A run of 11 helical transmembrane segments spans residues 22 to 42, 44 to 64, 97 to 117, 140 to 160, 163 to 183, 207 to 227, 259 to 279, 319 to 339, 366 to 386, 389 to 409, and 423 to 443; these read TTWTLGLFGTAIGAGVLFFPI, AGFGGLIPILVMLVLAYPIAF, GVVITFLYFFAICPLLWIYGV, VVALLLLLLMAFVIWFGKDLM, VMSYLVWPFIASLVVISLSLI, ILVTVWLGISIMVFSFNFSPI, ASMLMVAVVMFFAFSCLFTLS, ASIIALVAIFKSFFGHYLGTL, LSMVFIMGSTWVVAYANPNIL, IEAMGAPIIASLLCLLPMYAI, and DNLFVTAIGLLTILNIVYKLF.

It belongs to the amino acid/polyamine transporter 2 family. SdaC/TdcC subfamily.

It localises to the cell inner membrane. The catalysed reaction is L-threonine(in) + H(+)(in) = L-threonine(out) + H(+)(out). The enzyme catalyses L-serine(in) + H(+)(in) = L-serine(out) + H(+)(out). Involved in the import of threonine and serine into the cell, with the concomitant import of a proton (symport system). The protein is Threonine/serine transporter TdcC of Klebsiella pneumoniae (strain 342).